The primary structure comprises 525 residues: Protein nucleotidyltransferase YdiU (525 aa).

The ATP site is built by glycine 107, glycine 109, arginine 110, lysine 129, aspartate 141, glycine 142, arginine 192, and arginine 199. Aspartate 268 serves as the catalytic Proton acceptor. 2 residues coordinate Mg(2+): asparagine 269 and aspartate 278. Residue aspartate 278 coordinates ATP.

This sequence belongs to the SELO family. It depends on Mg(2+) as a cofactor. The cofactor is Mn(2+).

It catalyses the reaction L-seryl-[protein] + ATP = 3-O-(5'-adenylyl)-L-seryl-[protein] + diphosphate. The enzyme catalyses L-threonyl-[protein] + ATP = 3-O-(5'-adenylyl)-L-threonyl-[protein] + diphosphate. It carries out the reaction L-tyrosyl-[protein] + ATP = O-(5'-adenylyl)-L-tyrosyl-[protein] + diphosphate. The catalysed reaction is L-histidyl-[protein] + UTP = N(tele)-(5'-uridylyl)-L-histidyl-[protein] + diphosphate. It catalyses the reaction L-seryl-[protein] + UTP = O-(5'-uridylyl)-L-seryl-[protein] + diphosphate. The enzyme catalyses L-tyrosyl-[protein] + UTP = O-(5'-uridylyl)-L-tyrosyl-[protein] + diphosphate. In terms of biological role, nucleotidyltransferase involved in the post-translational modification of proteins. It can catalyze the addition of adenosine monophosphate (AMP) or uridine monophosphate (UMP) to a protein, resulting in modifications known as AMPylation and UMPylation. This chain is Protein nucleotidyltransferase YdiU, found in Ralstonia nicotianae (strain ATCC BAA-1114 / GMI1000) (Ralstonia solanacearum).